The primary structure comprises 155 residues: Protein U1 (155 aa).

It belongs to the nanovirus U1 protein family.

In Cicer arietinum (Chickpea), this protein is Protein U1 (DNA-U1).